Consider the following 115-residue polypeptide: Salivary protein gSG6 (115 aa).

The N-terminal stretch at 1–28 is a signal peptide; the sequence is MAIRVELLLAMVLLPLLLLESVVPHAAA.

In terms of tissue distribution, female saliva (at protein level). Distal-lateral lobes of female salivary gland (at protein level). Not detected in male salivary gland (at protein level).

Its subcellular location is the secreted. Functionally, required for efficient probing and blood feeding. The sequence is that of Salivary protein gSG6 from Anopheles gambiae (African malaria mosquito).